The sequence spans 561 residues: SH3 domain-binding protein 2 (561 aa).

One can recognise a PH domain in the interval 26–130 (GVAKAGYLHK…WMALLRREIG (105 aa)). 2 disordered regions span residues 160 to 316 (VDIS…GACS) and 333 to 451 (KLKS…YEKV). Positions 170-188 (DNEDYEHDDEDDSYLEPDS) are enriched in acidic residues. 2 positions are modified to phosphotyrosine; by SYK: Tyr174 and Tyr183. The SH3-binding signature appears at 201 to 210 (PPAYPPPPVP). 2 stretches are compositionally biased toward pro residues: residues 202 to 213 (PAYPPPPVPTPR) and 233 to 242 (PLLPPPPPKH). The span at 252 to 266 (EDSKRDPLCPRRAEP) shows a compositional bias: basic and acidic residues. Ser278 bears the Phosphoserine mark. Positions 342-354 (RGPPTSEPPPVPA) are enriched in pro residues. 2 positions are modified to phosphoserine: Ser416 and Ser427. A Phosphotyrosine; by SYK modification is found at Tyr448. The SH2 domain maps to 457–555 (VFVNTTESCE…HQSLLLRHPY (99 aa)).

Post-translationally, phosphorylated. Phosphorylation at Tyr-448 may stimulate the activity of the LYN kinase. In terms of tissue distribution, expressed in a variety of tissues including lung, liver, skeletal muscle, kidney and pancreas.

In terms of biological role, binds differentially to the SH3 domains of certain proteins of signal transduction pathways. Binds to phosphatidylinositols; linking the hemopoietic tyrosine kinase fes to the cytoplasmic membrane in a phosphorylation dependent mechanism. The protein is SH3 domain-binding protein 2 (SH3BP2) of Homo sapiens (Human).